Consider the following 769-residue polypeptide: Protein transport protein sec39 (769 aa).

It belongs to the SEC39 family. Component of a peripheral membrane protein complex consisting of dsl1, sec39 and tip20.

The protein resides in the endoplasmic reticulum membrane. Its function is as follows. Required for protein transport between the Golgi and the endoplasmic reticulum. May contribute to tethering of coatomer-coated retrograde transport vesicles to the ER membrane through interaction with and stabilization of the SNARE complex. In Schizosaccharomyces pombe (strain 972 / ATCC 24843) (Fission yeast), this protein is Protein transport protein sec39.